The primary structure comprises 66 residues: Large ribosomal subunit protein bL31 (66 aa).

The Zn(2+) site is built by Cys16, Cys18, Cys36, and Cys39.

The protein belongs to the bacterial ribosomal protein bL31 family. Type A subfamily. In terms of assembly, part of the 50S ribosomal subunit. It depends on Zn(2+) as a cofactor.

In terms of biological role, binds the 23S rRNA. The protein is Large ribosomal subunit protein bL31 of Priestia megaterium (Bacillus megaterium).